We begin with the raw amino-acid sequence, 396 residues long: Flavohemoprotein (396 aa).

A Globin domain is found at 1–136 (MLDAQTIATV…LANVFINREA (136 aa)). H85 lines the heme b pocket. Catalysis depends on charge relay system residues Y95 and E135. The segment at 147-396 (GGWEGTRDFR…YECFGPHKVL (250 aa)) is reductase. Positions 150 to 255 (EGTRDFRIVA…VAPAGDFFMA (106 aa)) constitute an FAD-binding FR-type domain. Residues Y188 and 204–207 (RQYS) contribute to the FAD site. 268-273 (GVGQTP) contributes to the NADP(+) binding site. 389–392 (CFGP) provides a ligand contact to FAD.

It belongs to the globin family. Two-domain flavohemoproteins subfamily. The protein in the C-terminal section; belongs to the flavoprotein pyridine nucleotide cytochrome reductase family. Monomer. FAD serves as cofactor. It depends on heme b as a cofactor.

Its subcellular location is the cytoplasm. The catalysed reaction is 2 nitric oxide + NADPH + 2 O2 = 2 nitrate + NADP(+) + H(+). It carries out the reaction 2 nitric oxide + NADH + 2 O2 = 2 nitrate + NAD(+) + H(+). Its function is as follows. Is involved in NO detoxification in an aerobic process, termed nitric oxide dioxygenase (NOD) reaction that utilizes O(2) and NAD(P)H to convert NO to nitrate, which protects the bacterium from various noxious nitrogen compounds. Therefore, plays a central role in the inducible response to nitrosative stress. In the presence of oxygen and NADH, HMP has NADH oxidase activity, which leads to the generation of superoxide and H(2)O(2), both in vitro and in vivo, and it has been suggested that HMP might act as an amplifier of superoxide stress. Under anaerobic conditions, HMP also exhibits nitric oxide reductase and FAD reductase activities. However, all these reactions are much lower than NOD activity. Functionally, various electron acceptors are also reduced by HMP in vitro, including dihydropterine, ferrisiderophores, ferric citrate, cytochrome c, nitrite, S-nitrosoglutathione, and alkylhydroperoxides. However, it is unknown if these reactions are of any biological significance in vivo. This chain is Flavohemoprotein (hmp), found in Escherichia coli (strain K12).